The primary structure comprises 84 residues: Small ribosomal subunit protein uS17c (84 aa).

The protein belongs to the universal ribosomal protein uS17 family. In terms of assembly, part of the 30S ribosomal subunit.

Its subcellular location is the plastid. The protein localises to the chloroplast. One of the primary rRNA binding proteins, it binds specifically to the 5'-end of 16S ribosomal RNA. In Phaeodactylum tricornutum (strain CCAP 1055/1), this protein is Small ribosomal subunit protein uS17c (rps17).